A 336-amino-acid chain; its full sequence is Prenytransferase ascA (336 aa).

Residues 1-26 are disordered; that stretch reads MAAKSRSPKRGTSEKTPLVEKEAPYQ. The segment covering 11 to 23 has biased composition (basic and acidic residues); sequence GTSEKTPLVEKEA. Helical transmembrane passes span 52–72, 74–94, 131–151, 179–199, 206–226, 251–271, 272–292, and 314–334; these read PHGNYMIYFPHIIGLMYASAI, PTELSVLGHRAAIFAIWTFLM, GHVFTLILTLLGFAAIQSLPI, VILGSTLASTIALSAYSVGLP, FVPTLCLSATIMLLVVFYDVV, LEGLFAFITLSIAGSLTTLGY, LVGMGHWFYLFSVGGLTFGLV, and FAILNLLTGFIMEYATKDYVV.

This sequence belongs to the UbiA prenyltransferase family. Requires Mg(2+) as cofactor.

The protein localises to the membrane. The catalysed reaction is orsellinate + (2E,6E)-farnesyl diphosphate = ilicicolinate B + diphosphate. It participates in secondary metabolite biosynthesis; terpenoid biosynthesis. In terms of biological role, prenytransferase; part of the asc-1 gene cluster that mediates the biosynthesis of both ascochlorin and ascofuranone, a strong inhibitor of cyanide-insensitive alternative oxidases and a promising drug candidate against African trypanosomiasis. The first step in the pathway is performed by the non-reducing polyketide synthase ascC that produces orsellinic acid by condensing acetyl-CoA with 3 malonyl-CoA units. Orsellinic acid is then prenylated by the prenyltransferase ascA to yield ilicicolinic acid B. Ilicicolinic acid B is further reduced to ilicicolin B by the reductase ascB. The halogenase ascD then chlorinates ilicicolin B to produce ilicicolin A which is converted to ilicicolin A epoxide by the cytochrome P450 monooxygenase ascE that catalyzes stereoselective epoxidation of the terminal double bond of the prenyl group. Ilicicolin A epoxide is the last common precursor for the biosynthesis of ascofuranone and ascochlorin. The terpene cyclase ascF produces a monocyclic terpene, and the cyclization reaction is proposed to be initiated by protonation of the terminal epoxide of ilicicolin A epoxide to generate a monocyclic tertiarycation, which is followed by a series of hydride and methyl shifts with abstraction of proton, leading to the formation of the (14S,15R,19R)-trimethylcyclohexanone ring structure of ilicicolin C, which is finally reduced to ascochlorin by the dehydrogenase ascG. On the other hand, ilicicolin A epoxide is hydroxylated by the cytochrome P450 monooxygenase ascH, and the resultant product is cyclized by the terpene cyclase ascI to ascofuranol via protonation-initiated epoxide ring opening, which facilitates the 6-endo-tet cyclization to form the tetrahy-drofuran ring. Finally, ascofuranol is oxidized into ascofuranone by ascJ. The chain is Prenytransferase ascA from Acremonium egyptiacum (Oospora egyptiaca).